The chain runs to 422 residues: UDP-N-acetylglucosamine 1-carboxyvinyltransferase (422 aa).

24 to 25 (KN) provides a ligand contact to phosphoenolpyruvate. Arginine 93 is a binding site for UDP-N-acetyl-alpha-D-glucosamine. Cysteine 117 acts as the Proton donor in catalysis. 2-(S-cysteinyl)pyruvic acid O-phosphothioketal is present on cysteine 117. UDP-N-acetyl-alpha-D-glucosamine-binding positions include 122–126 (RPVDL), 162–165 (KVSV), aspartate 307, and isoleucine 329.

This sequence belongs to the EPSP synthase family. MurA subfamily.

It is found in the cytoplasm. It catalyses the reaction phosphoenolpyruvate + UDP-N-acetyl-alpha-D-glucosamine = UDP-N-acetyl-3-O-(1-carboxyvinyl)-alpha-D-glucosamine + phosphate. The protein operates within cell wall biogenesis; peptidoglycan biosynthesis. Cell wall formation. Adds enolpyruvyl to UDP-N-acetylglucosamine. The sequence is that of UDP-N-acetylglucosamine 1-carboxyvinyltransferase from Vibrio atlanticus (strain LGP32) (Vibrio splendidus (strain Mel32)).